We begin with the raw amino-acid sequence, 245 residues long: MDDASTLIDVKEYSDTEVQKNRVLTLEEWREKWVDGKIGFHQEQGHQLLKKHLDTFLKGENVLRVFFPLCGKAVEMKWFADRGHCVVGVEISELGIREFFTEQNLSYSEEPIMEIPGAKVFKSSSGNISLYCCNLFDLPRVNIGKFDRIWDRGALVAVNPGDRKCYTDIMLSLTRKGFRYLLAVLSYDPTKHPGPPFYVPDAEIKNLFGSTCNIHCLEKVDVFEERHKSWGIDYIVEKLYLLTEK.

Position 14 is a phosphoserine (S14). S-adenosyl-L-methionine is bound at residue 29–40 (WREKWVDGKIGF). F40 is a substrate binding site. K58 is modified (N6-acetyllysine). Positions 69, 90, and 152 each coordinate S-adenosyl-L-methionine.

The protein belongs to the class I-like SAM-binding methyltransferase superfamily. TPMT family. As to quaternary structure, monomer.

It is found in the cytoplasm. It catalyses the reaction S-adenosyl-L-methionine + a thiopurine = S-adenosyl-L-homocysteine + a thiopurine S-methylether.. The sequence is that of Thiopurine S-methyltransferase (TPMT) from Panthera tigris (Tiger).